Reading from the N-terminus, the 273-residue chain is Putative tyrosine-protein phosphatase H16_A0669 (273 aa).

Residues 1 to 15 (MIKWLQRAGCLSAHA) form the signal peptide. C169 functions as the Phosphocysteine intermediate in the catalytic mechanism.

Belongs to the protein-tyrosine phosphatase family.

The catalysed reaction is O-phospho-L-tyrosyl-[protein] + H2O = L-tyrosyl-[protein] + phosphate. The sequence is that of Putative tyrosine-protein phosphatase H16_A0669 from Cupriavidus necator (strain ATCC 17699 / DSM 428 / KCTC 22496 / NCIMB 10442 / H16 / Stanier 337) (Ralstonia eutropha).